The sequence spans 339 residues: Glycerol-3-phosphate dehydrogenase [NAD(P)+] (339 aa).

Ser15, Tyr16, His36, and Lys110 together coordinate NADPH. The sn-glycerol 3-phosphate site is built by Lys110, Gly139, and Thr141. Ala143 serves as a coordination point for NADPH. Positions 195, 248, 258, 259, and 260 each coordinate sn-glycerol 3-phosphate. Lys195 acts as the Proton acceptor in catalysis. Arg259 serves as a coordination point for NADPH. NADPH-binding residues include Val283 and Glu285.

Belongs to the NAD-dependent glycerol-3-phosphate dehydrogenase family.

The protein resides in the cytoplasm. The enzyme catalyses sn-glycerol 3-phosphate + NAD(+) = dihydroxyacetone phosphate + NADH + H(+). The catalysed reaction is sn-glycerol 3-phosphate + NADP(+) = dihydroxyacetone phosphate + NADPH + H(+). Its pathway is membrane lipid metabolism; glycerophospholipid metabolism. In terms of biological role, catalyzes the reduction of the glycolytic intermediate dihydroxyacetone phosphate (DHAP) to sn-glycerol 3-phosphate (G3P), the key precursor for phospholipid synthesis. The chain is Glycerol-3-phosphate dehydrogenase [NAD(P)+] from Klebsiella pneumoniae subsp. pneumoniae (strain ATCC 700721 / MGH 78578).